The chain runs to 143 residues: D-aminoacyl-tRNA deacylase (143 aa).

The Gly-cisPro motif, important for rejection of L-amino acids signature appears at 135-136; that stretch reads GP.

Belongs to the DTD family. As to quaternary structure, homodimer.

The protein localises to the cytoplasm. The enzyme catalyses glycyl-tRNA(Ala) + H2O = tRNA(Ala) + glycine + H(+). The catalysed reaction is a D-aminoacyl-tRNA + H2O = a tRNA + a D-alpha-amino acid + H(+). Its function is as follows. An aminoacyl-tRNA editing enzyme that deacylates mischarged D-aminoacyl-tRNAs. Also deacylates mischarged glycyl-tRNA(Ala), protecting cells against glycine mischarging by AlaRS. Acts via tRNA-based rather than protein-based catalysis; rejects L-amino acids rather than detecting D-amino acids in the active site. By recycling D-aminoacyl-tRNA to D-amino acids and free tRNA molecules, this enzyme counteracts the toxicity associated with the formation of D-aminoacyl-tRNA entities in vivo and helps enforce protein L-homochirality. The protein is D-aminoacyl-tRNA deacylase of Mycobacterium avium (strain 104).